A 353-amino-acid polypeptide reads, in one-letter code: Quinolinate synthase (353 aa).

The iminosuccinate site is built by His47 and Ser68. Residue Cys113 coordinates [4Fe-4S] cluster. Iminosuccinate-binding positions include 139–141 (YAN) and Ser156. Residue Cys200 coordinates [4Fe-4S] cluster. Iminosuccinate contacts are provided by residues 226–228 (HPE) and Thr243. Residue Cys297 participates in [4Fe-4S] cluster binding.

It belongs to the quinolinate synthase family. Type 1 subfamily. It depends on [4Fe-4S] cluster as a cofactor.

Its subcellular location is the cytoplasm. The catalysed reaction is iminosuccinate + dihydroxyacetone phosphate = quinolinate + phosphate + 2 H2O + H(+). It functions in the pathway cofactor biosynthesis; NAD(+) biosynthesis; quinolinate from iminoaspartate: step 1/1. In terms of biological role, catalyzes the condensation of iminoaspartate with dihydroxyacetone phosphate to form quinolinate. This chain is Quinolinate synthase, found in Pectobacterium atrosepticum (strain SCRI 1043 / ATCC BAA-672) (Erwinia carotovora subsp. atroseptica).